Reading from the N-terminus, the 566-residue chain is Glutamate--tRNA ligase (566 aa).

The 'HIGH' region motif lies at 105–115 (PNPDGPIHLGN).

Belongs to the class-I aminoacyl-tRNA synthetase family. Glutamate--tRNA ligase type 2 subfamily.

The protein localises to the cytoplasm. It catalyses the reaction tRNA(Glu) + L-glutamate + ATP = L-glutamyl-tRNA(Glu) + AMP + diphosphate. In terms of biological role, catalyzes the attachment of glutamate to tRNA(Glu) in a two-step reaction: glutamate is first activated by ATP to form Glu-AMP and then transferred to the acceptor end of tRNA(Glu). This chain is Glutamate--tRNA ligase, found in Sulfurisphaera tokodaii (strain DSM 16993 / JCM 10545 / NBRC 100140 / 7) (Sulfolobus tokodaii).